We begin with the raw amino-acid sequence, 499 residues long: DNA-directed RNA polymerase subunit Rpo2N (499 aa).

Belongs to the RNA polymerase beta chain family. Part of the RNA polymerase complex.

It is found in the cytoplasm. It carries out the reaction RNA(n) + a ribonucleoside 5'-triphosphate = RNA(n+1) + diphosphate. Its function is as follows. DNA-dependent RNA polymerase (RNAP) catalyzes the transcription of DNA into RNA using the four ribonucleoside triphosphates as substrates. The Rpo2 subunit (Rpo2N and Rpo2C in this organism) is implicated in DNA promoter recognition and in nucleotide binding. This Methanococcus vannielii (strain ATCC 35089 / DSM 1224 / JCM 13029 / OCM 148 / SB) protein is DNA-directed RNA polymerase subunit Rpo2N.